A 154-amino-acid chain; its full sequence is Myoglobin (154 aa).

The 147-residue stretch at 2 to 148 folds into the Globin domain; sequence GLSDQEWQHV…FRNDMASKYK (147 aa). His65 contributes to the nitrite binding site. His65 provides a ligand contact to O2. His94 lines the heme b pocket.

As to quaternary structure, monomeric.

The protein localises to the cytoplasm. It localises to the sarcoplasm. The enzyme catalyses Fe(III)-heme b-[protein] + nitric oxide + H2O = Fe(II)-heme b-[protein] + nitrite + 2 H(+). It catalyses the reaction H2O2 + AH2 = A + 2 H2O. Monomeric heme protein which primary function is to store oxygen and facilitate its diffusion within muscle tissues. Reversibly binds oxygen through a pentacoordinated heme iron and enables its timely and efficient release as needed during periods of heightened demand. Depending on the oxidative conditions of tissues and cells, and in addition to its ability to bind oxygen, it also has a nitrite reductase activity whereby it regulates the production of bioactive nitric oxide. Under stress conditions, like hypoxia and anoxia, it also protects cells against reactive oxygen species thanks to its pseudoperoxidase activity. This Dromaius novaehollandiae (Emu) protein is Myoglobin.